The following is a 23-amino-acid chain: uncharacterized protein (23 aa).

A helical membrane pass occupies residues 3-23 (YFFMGISFMVIVWAGTFALMI).

It localises to the cell inner membrane. This is an uncharacterized protein from Escherichia coli (strain K12).